Reading from the N-terminus, the 716-residue chain is Pyruvate/proton symporter BtsT (716 aa).

Topologically, residues 1–5 (MDTKK) are cytoplasmic. Residues 6–26 (IFKHIPWVILGIIGAFCLAVV) form a helical membrane-spanning segment. The Periplasmic segment spans residues 27-30 (ALRR). The chain crosses the membrane as a helical span at residues 31–51 (GEHISALWIVVASVSVYLVAY). At 52–88 (RYYSLYIAQKVMKLDPTRATPAVINNDGLNYVPTNRY) the chain is on the cytoplasmic side. Residues 89-109 (VLFGHHFAAIAGAGPLVGPVL) form a helical membrane-spanning segment. Topologically, residues 110–119 (AAQMGYLPGT) are periplasmic. A helical transmembrane segment spans residues 120–140 (LWLLAGVVLAGAVQDFMVLFI). Residues 141–163 (SSRRNGASLGEMIKEEMGPVPGT) lie on the Cytoplasmic side of the membrane. The chain crosses the membrane as a helical span at residues 164–184 (IALFGCFLIMIIILAVLALIV). Residues 185–191 (VKALAES) lie on the Periplasmic side of the membrane. Residues 192 to 212 (PWGVFTVCSTVPIALFMGIYM) form a helical membrane-spanning segment. Over 213-222 (RFIRPGRVGE) the chain is Cytoplasmic. Residues 223-243 (VSVIGIVLLVASIYFGGVIAH) traverse the membrane as a helical segment. Over 244 to 257 (DPYWGPALTFKDTT) the chain is Periplasmic. The helical transmembrane segment at 258-278 (ITFALIGYAFVSALLPVWLIL) threads the bilayer. Topologically, residues 279–282 (APRD) are cytoplasmic. The helical transmembrane segment at 283-303 (YLATFLKIGVIVGLALGIVVL) threads the bilayer. The Periplasmic segment spans residues 304 to 326 (NPELKMPAMTQYIDGTGPLWKGA). A helical membrane pass occupies residues 327–347 (LFPFLFITIACGAVSGFHALI). At 348 to 374 (SSGTTPKLLANETDARFIGYGAMLMES) the chain is on the cytoplasmic side. Residues 375 to 395 (FVAIMALVAASIIEPGLYFAM) traverse the membrane as a helical segment. Topologically, residues 396 to 484 (NTPPAGLGIT…HVFHKVLPMA (89 aa)) are periplasmic. A helical membrane pass occupies residues 485 to 505 (DMGFWYHFGILFEALFILTAL). Over 506–531 (DAGTRSGRFMLQDLLGNFIPFLKKTD) the chain is Cytoplasmic. Residues 532–552 (SLVAGIIGTAGCVGLWGYLLY) form a helical membrane-spanning segment. Over 553 to 568 (QGVVDPLGGVKSLWPL) the chain is Periplasmic. A helical membrane pass occupies residues 569 to 589 (FGISNQMLAAVALVLGTVVLI). Over 590-596 (KMKRTQY) the chain is Cytoplasmic. Residues 597 to 617 (IWVTVVPAVWLLICTTWALGL) traverse the membrane as a helical segment. Topologically, residues 618 to 668 (KLFSTNPQMEGFFYMASQYKEKIANGTDLTAQQIANMNHIVVNNYTNAGLS) are periplasmic. The chain crosses the membrane as a helical span at residues 669–689 (ILFLIVVYSIIFYGFKTWLAV). Residues 690–716 (RNSDKRTDKETPYVPIPEGGVKISSHH) are Cytoplasmic-facing. The disordered stretch occupies residues 696-716 (TDKETPYVPIPEGGVKISSHH).

Belongs to the peptide transporter carbon starvation (CstA) (TC 2.A.114) family. As to quaternary structure, interacts with BtsS and YpdA.

Its subcellular location is the cell inner membrane. It catalyses the reaction pyruvate(out) + H(+)(out) = pyruvate(in) + H(+)(in). Transport is inhibited by the protonophores 2,4-dinitrophenol (DNP) and carbonyl cyanide m-chlorophenyl hydrazone (CCCP), but not by ionophores such as valinomycin, nonactin and nigericin. Its function is as follows. Transports pyruvate with a high affinity and specificity. The process is driven by the proton motive force. Under nutrient limiting conditions, mediates the uptake of pyruvate, thus enabling it to be used as a carbon source for the growth and survival. Part of a nutrient-sensing regulatory network composed of the two-component regulatory systems BtsS/BtsR and YpdA/YpdB, and their respective target proteins, BtsT and YhjX. The polypeptide is Pyruvate/proton symporter BtsT (Escherichia coli (strain K12)).